The chain runs to 357 residues: tRNA-specific 2-thiouridylase MnmA (357 aa).

ATP-binding positions include 6-13 (AMSGGVDS) and L32. C101 functions as the Nucleophile in the catalytic mechanism. C101 and C193 form a disulfide bridge. G125 serves as a coordination point for ATP. The interval 143–145 (KDQ) is interaction with tRNA. C193 acts as the Cysteine persulfide intermediate in catalysis.

It belongs to the MnmA/TRMU family.

It is found in the cytoplasm. The enzyme catalyses S-sulfanyl-L-cysteinyl-[protein] + uridine(34) in tRNA + AH2 + ATP = 2-thiouridine(34) in tRNA + L-cysteinyl-[protein] + A + AMP + diphosphate + H(+). Its function is as follows. Catalyzes the 2-thiolation of uridine at the wobble position (U34) of tRNA, leading to the formation of s(2)U34. This chain is tRNA-specific 2-thiouridylase MnmA, found in Mycolicibacterium gilvum (strain PYR-GCK) (Mycobacterium gilvum (strain PYR-GCK)).